The primary structure comprises 1359 residues: NPC1-like intracellular cholesterol transporter 1 (1359 aa).

Positions 1-21 (MAEAGLRGWLLWALLLRLAQS) are cleaved as a signal peptide. The Extracellular segment spans residues 22-284 (EPYTTIHQPG…TFYLGQMPGS (263 aa)). Intrachain disulfides connect cysteine 33–cysteine 90, cysteine 39–cysteine 57, cysteine 78–cysteine 125, cysteine 91–cysteine 129, cysteine 113–cysteine 254, cysteine 116–cysteine 172, cysteine 189–cysteine 197, cysteine 243–cysteine 259, and cysteine 256–cysteine 263. N-linked (GlcNAc...) asparagine glycosylation occurs at asparagine 54. Asparagine 132 and asparagine 138 each carry an N-linked (GlcNAc...) asparagine glycan. Asparagine 244 is a glycosylation site (N-linked (GlcNAc...) asparagine). The chain crosses the membrane as a helical span at residues 285-305 (LVLIIILCSVFAVVTILLVGF). Topologically, residues 306–351 (RVAPARDKSKMVDPKKGTSLSDKLSFSTHTLLGQFFQGWGTWVASW) are cytoplasmic. Residues 352–372 (PLTILVLSVIPVVALAAGLVF) form a helical membrane-spanning segment. Residues 373–632 (TELTTDPVEL…DEINRTTAED (260 aa)) lie on the Extracellular side of the membrane. N-linked (GlcNAc...) asparagine glycans are attached at residues asparagine 416, asparagine 431, asparagine 464, asparagine 479, asparagine 497, and asparagine 506. Cysteine 471 and cysteine 485 are joined by a disulfide. A disulfide bridge connects residues cysteine 525 and cysteine 542. The N-linked (GlcNAc...) asparagine glycan is linked to asparagine 626. An SSD domain is found at 632–797 (DLPIFATSYI…MSAFVALLSL (166 aa)). A helical transmembrane segment spans residues 633 to 653 (LPIFATSYIVIFLYISLALGS). The Cytoplasmic segment spans residues 654-666 (YSSWSRVMVDSKA). A helical membrane pass occupies residues 667 to 687 (TLGLGGVAVVLGAVMAAMGFF). Residues 688-696 (SYLGIRSSL) are Extracellular-facing. Residues 697-717 (VILQVVPFLVLSVGADNIFIF) form a helical membrane-spanning segment. Residues 718–742 (VLEYQRLPRRPGEPREVHIGRALGR) are Cytoplasmic-facing. The helical transmembrane segment at 743 to 763 (VAPSMLLCSLSEAICFFLGAL) threads the bilayer. Residues 764 to 776 (TPMPAVRTFALTS) are Extracellular-facing. The helical transmembrane segment at 777–797 (GLAVILDFLLQMSAFVALLSL) threads the bilayer. At 798 to 846 (DSKRQEASRLDVCCCVKPQELPPPGQGEGLLLGFFQKAYAPFLLHWITR) the chain is on the cytoplasmic side. Residues 847 to 867 (GVVLLLFLALFGVSLYSMCHI) form a helical membrane-spanning segment. Residues 868 to 1139 (SVGLDQELAL…EQYLTILPEG (272 aa)) lie on the Extracellular side of the membrane. Cystine bridges form between cysteine 920-cysteine 925, cysteine 966-cysteine 1024, and cysteine 980-cysteine 989. The chain crosses the membrane as a helical span at residues 1140 to 1160 (LFMLSLCLVPTFAVSCLLLGL). The Cytoplasmic portion of the chain corresponds to 1161–1168 (DLRSGLLN). Residues 1169-1189 (LLSIVMILVDTVGFMALWGIS) form a helical membrane-spanning segment. Topologically, residues 1190–1191 (YN) are extracellular. Residues 1192–1212 (AVSLINLVSAVGMSVEFVSHI) traverse the membrane as a helical segment. At 1213–1236 (TRSFAISTKPTWLERAKEATISMG) the chain is on the cytoplasmic side. Residues 1237–1257 (SAVFAGVAMTNLPGILVLGLA) form a helical membrane-spanning segment. The Extracellular portion of the chain corresponds to 1258–1268 (KAQLIQIFFFR). A helical membrane pass occupies residues 1269–1289 (LNLLITLLGLLHGLVFLPVIL). The Cytoplasmic portion of the chain corresponds to 1290–1359 (SYVGPDVNPA…NFLPNNGRQF (70 aa)).

The protein belongs to the patched family. In terms of assembly, interacts with RAB11A, MYO5B and RAB11FIP2. Interaction with RAB11A, MYO5B and RAB11FIP2 is required for proper transport to the plasma membrane upon cholesterol depletion. Interacts with NPC2. Interacts with LIMA1. In terms of processing, highly glycosylated. As to expression, widely expressed. Expressed in liver. Also expressed in small intestine, pancreas, kidney, lung, pancreas, spleen, heart, gall bladder, brain, testis, stomach and muscle.

The protein resides in the apical cell membrane. Its subcellular location is the cell membrane. The protein localises to the cytoplasmic vesicle membrane. It carries out the reaction cholesterol(in) = cholesterol(out). The catalysed reaction is sitosterol(out) = sitosterol(in). In terms of biological role, plays a major role in cholesterol homeostasis. Critical for the uptake of cholesterol across the plasma membrane of the intestinal enterocyte. Involved in plant sterol absorption, it transports sitosterol, although at lower rates than cholesterol. Is the direct molecular target of ezetimibe, a drug that inhibits cholesterol absorption and is approved for the treatment of hypercholesterolemia. May have a function in the transport of multiple lipids and their homeostasis, thereby influencing lipid metabolism regulation. May be involved in caveolin trafficking from the plasma membrane. In addition, acts as a negative regulator of NPC2 and down-regulates its expression and secretion by inhibiting its maturation and accelerating its degradation. The protein is NPC1-like intracellular cholesterol transporter 1 of Homo sapiens (Human).